We begin with the raw amino-acid sequence, 123 residues long: Large ribosomal subunit protein uL22 (123 aa).

Belongs to the universal ribosomal protein uL22 family. As to quaternary structure, part of the 50S ribosomal subunit.

Its function is as follows. This protein binds specifically to 23S rRNA; its binding is stimulated by other ribosomal proteins, e.g. L4, L17, and L20. It is important during the early stages of 50S assembly. It makes multiple contacts with different domains of the 23S rRNA in the assembled 50S subunit and ribosome. The globular domain of the protein is located near the polypeptide exit tunnel on the outside of the subunit, while an extended beta-hairpin is found that lines the wall of the exit tunnel in the center of the 70S ribosome. This Synechococcus sp. (strain JA-3-3Ab) (Cyanobacteria bacterium Yellowstone A-Prime) protein is Large ribosomal subunit protein uL22.